The chain runs to 194 residues: Molybdenum cofactor guanylyltransferase (194 aa).

GTP is bound by residues 12 to 14, lysine 25, asparagine 53, aspartate 71, and aspartate 101; that span reads LAG. Aspartate 101 contacts Mg(2+).

The protein belongs to the MobA family. Monomer. An equilibrium exists between a monomeric and oligomeric form of the enzyme, which could be an octamer; whether this oligomeric arrangement is of functional relevance is unclear. Interacts with MoeA and MobB in vivo. Requires Mg(2+) as cofactor. It depends on Mn(2+) as a cofactor.

It localises to the cytoplasm. The enzyme catalyses Mo-molybdopterin + GTP + H(+) = Mo-molybdopterin guanine dinucleotide + diphosphate. Its function is as follows. Transfers a GMP moiety from GTP to Mo-molybdopterin (Mo-MPT) cofactor (Moco or molybdenum cofactor) to form Mo-molybdopterin guanine dinucleotide (Mo-MGD) cofactor. Is also involved in the biosynthesis of the bis-MGD form of the Moco cofactor (Mo-bisMGD) in which the metal is symmetrically ligated by the dithiolene groups of two MGD molecules. Is necessary and sufficient for the in vitro activation of the DMSOR molybdoenzyme that uses the Mo-bisMGD form of molybdenum cofactor, which implies formation and efficient insertion of the cofactor into the enzyme without the need of a chaperone. Is specific for GTP since other nucleotides such as ATP and GMP cannot be utilized. This Escherichia coli (strain K12) protein is Molybdenum cofactor guanylyltransferase (mobA).